The chain runs to 349 residues: Transmembrane protein 255A (349 aa).

4 consecutive transmembrane segments (helical) span residues 30-50 (IYVT…GLAA), 57-77 (VTVG…LGII), 89-109 (LVAS…CAIV), and 226-246 (TILN…LGGF). The segment at 303 to 329 (PSSPPSGLSDEPQSASPSPSYMWSSSA) is disordered. The span at 316-329 (SASPSPSYMWSSSA) shows a compositional bias: low complexity.

The protein belongs to the TMEM255 family.

The protein resides in the membrane. The protein is Transmembrane protein 255A (TMEM255A) of Homo sapiens (Human).